The sequence spans 2208 residues: Glutamate synthase 1 [NADH], chloroplastic (2208 aa).

A chloroplast-targeting transit peptide spans 1–49 (MSAASSSSVLHLRTNQQLLSLRSLKNSTSVASQLAVTSGVSRRRSCTAR). Catalysis depends on Cys117, which acts as the Nucleophile. The Glutamine amidotransferase type-2 domain occupies 117-521 (CGVGFVAELS…PGMMLLVDFE (405 aa)). Residues 1040–1067 (GKSNTGEGGELPSRMEPLADGSRNPKRS) form a disordered region. Position 1211 to 1268 (1211 to 1268 (LAETHQTLVANDLRGRTVLQTDGQLKTGRDVAVAALLGAEEFGFSTAPLITLGCIMMR)) interacts with FMN. 3 residues coordinate [3Fe-4S] cluster: Cys1264, Cys1270, and Cys1275. 1995–2009 (GGGDTGTDCIGTSIR) lines the NAD(+) pocket.

The protein belongs to the glutamate synthase family. Monomer. It depends on [3Fe-4S] cluster as a cofactor. FAD is required as a cofactor. Requires FMN as cofactor. As to expression, highly expressed in roots and at low levels in leaves.

The protein localises to the plastid. It localises to the chloroplast. The enzyme catalyses 2 L-glutamate + NAD(+) = L-glutamine + 2-oxoglutarate + NADH + H(+). It participates in amino-acid biosynthesis; L-glutamate biosynthesis via GLT pathway; L-glutamate from 2-oxoglutarate and L-glutamine (NAD(+) route): step 1/1. Its pathway is energy metabolism; nitrogen metabolism. Functionally, involved in glutamate biosynthesis. Required for non-photorespiratory ammonium assimilation. Probably involved in primary ammonium assimilation in roots. This Arabidopsis thaliana (Mouse-ear cress) protein is Glutamate synthase 1 [NADH], chloroplastic (GLT1).